The chain runs to 459 residues: Cysteine--tRNA ligase (459 aa).

Residue C28 participates in Zn(2+) binding. The 'HIGH' region signature appears at 30–40; the sequence is VTVYDLCHFGH. Zn(2+) is bound by residues C209, H234, and E238. Residues 266 to 270 carry the 'KMSKS' region motif; it reads KMSKS. Position 269 (K269) interacts with ATP.

It belongs to the class-I aminoacyl-tRNA synthetase family. In terms of assembly, monomer. It depends on Zn(2+) as a cofactor.

It is found in the cytoplasm. The catalysed reaction is tRNA(Cys) + L-cysteine + ATP = L-cysteinyl-tRNA(Cys) + AMP + diphosphate. In Actinobacillus pleuropneumoniae serotype 3 (strain JL03), this protein is Cysteine--tRNA ligase.